The following is a 119-amino-acid chain: Large ribosomal subunit protein bL20 (119 aa).

The protein belongs to the bacterial ribosomal protein bL20 family.

Its function is as follows. Binds directly to 23S ribosomal RNA and is necessary for the in vitro assembly process of the 50S ribosomal subunit. It is not involved in the protein synthesizing functions of that subunit. The protein is Large ribosomal subunit protein bL20 of Thermoanaerobacter sp. (strain X514).